The following is a 94-amino-acid chain: Surfactant-associated protein 3 (94 aa).

Found in lung alveolar cells type I and II, as well as alveolar macrophages (at protein level). Detected also in testis and kidney. Expressed by different tissues of the ocular system like cornea, conjuctiva, lacrimal gland, eyelid and efferent tear ducts (at protein level). From these tissues is secreted into the tear film (at protein level).

The protein localises to the cytoplasm. Its subcellular location is the secreted. Putative surfactant protein. May be involved in wound healing and in the reduction of the surface tension at the ocular surface. This chain is Surfactant-associated protein 3 (SFTA3), found in Homo sapiens (Human).